The following is a 662-amino-acid chain: Fructose-1,6-bisphosphatase class 3 (662 aa).

It belongs to the FBPase class 3 family. Mn(2+) serves as cofactor.

The enzyme catalyses beta-D-fructose 1,6-bisphosphate + H2O = beta-D-fructose 6-phosphate + phosphate. It participates in carbohydrate biosynthesis; gluconeogenesis. The protein is Fructose-1,6-bisphosphatase class 3 of Clostridium tetani (strain Massachusetts / E88).